Reading from the N-terminus, the 84-residue chain is Large ribosomal subunit protein bL27 (84 aa).

The disordered stretch occupies residues 1-21 (MAHKKGQGSTRNGRDSHSKRL). The span at 12-21 (NGRDSHSKRL) shows a compositional bias: basic and acidic residues.

This sequence belongs to the bacterial ribosomal protein bL27 family.

The polypeptide is Large ribosomal subunit protein bL27 (Methylacidiphilum infernorum (isolate V4) (Methylokorus infernorum (strain V4))).